Here is a 145-residue protein sequence, read N- to C-terminus: Natriuretic peptides A (145 aa).

A signal peptide spans 1 to 23 (MGTSFVGYLTFVLLLLALTKVRG). Positions 24 to 117 (GPAYNSPLSS…KLRELLNAPR (94 aa)) are excised as a propeptide. Cys125 and Cys141 form a disulfide bridge.

This sequence belongs to the natriuretic peptide family. Post-translationally, cleaved upon secretion to produce the functional hormone.

The protein localises to the secreted. In terms of biological role, hormone playing a key role in cardiovascular homeostasis through regulation of natriuresis, diuresis, and vasodilation. Has a cGMP-stimulating activity. This Aquarana catesbeiana (American bullfrog) protein is Natriuretic peptides A.